Consider the following 84-residue polypeptide: MMKTVIVLIVFSLVMIVVKSDNGYLLDKYTGCKIWCVINNDSCNSHCIGSGGYYGYCYFWKLACYCQGAPRSELWHYETNRCRA.

The N-terminal stretch at 1-20 is a signal peptide; sequence MMKTVIVLIVFSLVMIVVKS. Positions 21 to 83 constitute an LCN-type CS-alpha/beta domain; sequence DNGYLLDKYT…LWHYETNRCR (63 aa). Intrachain disulfides connect C32-C82, C36-C57, C43-C64, and C47-C66.

As to expression, expressed by the venom gland.

It is found in the secreted. Antimicrobial peptide with activity against both Gram-positive and -negative bacteria. In Mesobuthus eupeus (Lesser Asian scorpion), this protein is Antimicrobial peptide MeuNaTxbeta-2.